The following is a 1243-amino-acid chain: Protein MMS22-like (1243 aa).

The protein belongs to the MMS22 family. MMS22L subfamily. In terms of assembly, component of the MMS22L-TONSL complex.

The protein resides in the nucleus. Its subcellular location is the chromosome. Component of the MMS22L-TONSL complex, a complex that promotes homologous recombination-mediated repair of double-strand breaks (DSBs) at stalled or collapsed replication forks. The MMS22L-TONSL complex is required to maintain genome integrity during DNA replication. It mediates the assembly of RAD51 filaments on single-stranded DNA (ssDNA): the MMS22L-TONSL complex is recruited to DSBs following histone replacement by histone chaperones and eviction of the replication protein A complex (RPA/RP-A) from DSBs. Following recruitment to DSBs, the TONSL-MMS22L complex promotes recruitment of RAD51 filaments and subsequent homologous recombination. Within the complex, MMS22L acts by binding ssDNA. This Gallus gallus (Chicken) protein is Protein MMS22-like (MMS22L).